We begin with the raw amino-acid sequence, 233 residues long: MPARRRWFENRPVLKRIVLAVLALVVLPYVLIFFYLLPFIHPVSTLMLRDLVLLRGYDRRWVSLDEISPVLVQSVMMSEDGQYCFHGGVDWAEMRMLVEDTLKGQATRGGSTIPMQTAKNLFLWNSRSFVRKAMELPLAVSTDFVLSKRRLMEIYLNIAEWGPGIYGIEAAAQHHFKVPASKLTRRQASLLAVSLPNPIDRKAGKPGRGLRRLAGVIERRAQGSGEYIKCIYE.

Residues Ile-17–Leu-37 form a helical membrane-spanning segment.

The protein belongs to the glycosyltransferase 51 family.

The protein resides in the cell inner membrane. The catalysed reaction is [GlcNAc-(1-&gt;4)-Mur2Ac(oyl-L-Ala-gamma-D-Glu-L-Lys-D-Ala-D-Ala)](n)-di-trans,octa-cis-undecaprenyl diphosphate + beta-D-GlcNAc-(1-&gt;4)-Mur2Ac(oyl-L-Ala-gamma-D-Glu-L-Lys-D-Ala-D-Ala)-di-trans,octa-cis-undecaprenyl diphosphate = [GlcNAc-(1-&gt;4)-Mur2Ac(oyl-L-Ala-gamma-D-Glu-L-Lys-D-Ala-D-Ala)](n+1)-di-trans,octa-cis-undecaprenyl diphosphate + di-trans,octa-cis-undecaprenyl diphosphate + H(+). It participates in cell wall biogenesis; peptidoglycan biosynthesis. In terms of biological role, peptidoglycan polymerase that catalyzes glycan chain elongation from lipid-linked precursors. The protein is Biosynthetic peptidoglycan transglycosylase of Rhizobium etli (strain ATCC 51251 / DSM 11541 / JCM 21823 / NBRC 15573 / CFN 42).